The chain runs to 146 residues: uncharacterized protein (146 aa).

2 disordered regions span residues 1–33 and 50–70; these read MATF…GSYR and QHWR…SWEG.

This is an uncharacterized protein from Homo sapiens (Human).